A 277-amino-acid polypeptide reads, in one-letter code: Shikimate dehydrogenase (NADP(+)) (277 aa).

Shikimate is bound by residues 14-16 and T61; that span reads SKS. The active-site Proton acceptor is K65. D77 contributes to the NADP(+) binding site. N86 and D102 together coordinate shikimate. NADP(+)-binding positions include 127-131, 151-156, and M215; these read GAGGA and NRTPDK. Y217 is a binding site for shikimate. G239 lines the NADP(+) pocket.

Belongs to the shikimate dehydrogenase family. Homodimer.

The enzyme catalyses shikimate + NADP(+) = 3-dehydroshikimate + NADPH + H(+). The protein operates within metabolic intermediate biosynthesis; chorismate biosynthesis; chorismate from D-erythrose 4-phosphate and phosphoenolpyruvate: step 4/7. Functionally, involved in the biosynthesis of the chorismate, which leads to the biosynthesis of aromatic amino acids. Catalyzes the reversible NADPH linked reduction of 3-dehydroshikimate (DHSA) to yield shikimate (SA). This Nitrosomonas eutropha (strain DSM 101675 / C91 / Nm57) protein is Shikimate dehydrogenase (NADP(+)).